Consider the following 146-residue polypeptide: Large ribosomal subunit protein bL21 (146 aa).

The segment at 96–146 (KKKTRRKMGHRQELTRVMVKSISITNSTPKTSSKTEVKKKSTSPKASNPEN) is disordered.

Belongs to the bacterial ribosomal protein bL21 family. As to quaternary structure, part of the 50S ribosomal subunit. Contacts protein L20.

Functionally, this protein binds to 23S rRNA in the presence of protein L20. The sequence is that of Large ribosomal subunit protein bL21 from Prochlorococcus marinus subsp. pastoris (strain CCMP1986 / NIES-2087 / MED4).